We begin with the raw amino-acid sequence, 156 residues long: Holliday junction resolvase (156 aa).

The protein belongs to the RuvC family. Poxviruses-type subfamily. Mg(2+) serves as cofactor.

In terms of biological role, nuclease that specifically cleaves and resolves four-way DNA Holliday junctions into linear duplex products. This chain is Holliday junction resolvase, found in Vertebrata (FPV).